The following is a 435-amino-acid chain: Serine--tRNA ligase (435 aa).

238-240 (TAE) provides a ligand contact to L-serine. 269–271 (RAE) contacts ATP. Glutamate 292 contacts L-serine. 356–359 (EISS) contributes to the ATP binding site. Serine 392 lines the L-serine pocket.

Belongs to the class-II aminoacyl-tRNA synthetase family. Type-1 seryl-tRNA synthetase subfamily. Homodimer. The tRNA molecule binds across the dimer.

The protein localises to the cytoplasm. The catalysed reaction is tRNA(Ser) + L-serine + ATP = L-seryl-tRNA(Ser) + AMP + diphosphate + H(+). It carries out the reaction tRNA(Sec) + L-serine + ATP = L-seryl-tRNA(Sec) + AMP + diphosphate + H(+). Its pathway is aminoacyl-tRNA biosynthesis; selenocysteinyl-tRNA(Sec) biosynthesis; L-seryl-tRNA(Sec) from L-serine and tRNA(Sec): step 1/1. Its function is as follows. Catalyzes the attachment of serine to tRNA(Ser). Is also able to aminoacylate tRNA(Sec) with serine, to form the misacylated tRNA L-seryl-tRNA(Sec), which will be further converted into selenocysteinyl-tRNA(Sec). The chain is Serine--tRNA ligase from Methylobacterium sp. (strain 4-46).